We begin with the raw amino-acid sequence, 412 residues long: Argininosuccinate synthase (412 aa).

Residues alanine 16–serine 24 and alanine 44 contribute to the ATP site. L-citrulline-binding residues include tyrosine 96 and serine 101. Glycine 126 is a binding site for ATP. The L-aspartate site is built by threonine 128, asparagine 132, and aspartate 133. Asparagine 132 is a binding site for L-citrulline. The L-citrulline site is built by arginine 136, serine 185, serine 194, glutamate 270, and tyrosine 282.

This sequence belongs to the argininosuccinate synthase family. Type 1 subfamily. In terms of assembly, homotetramer.

The protein localises to the cytoplasm. The catalysed reaction is L-citrulline + L-aspartate + ATP = 2-(N(omega)-L-arginino)succinate + AMP + diphosphate + H(+). It functions in the pathway amino-acid biosynthesis; L-arginine biosynthesis; L-arginine from L-ornithine and carbamoyl phosphate: step 2/3. This chain is Argininosuccinate synthase, found in Shewanella baltica (strain OS195).